We begin with the raw amino-acid sequence, 147 residues long: Hemoglobin subunit beta (147 aa).

V2 bears the N-acetylvaline mark. Residues 3–147 form the Globin domain; that stretch reads NLSGDEKNAV…VANALAHRYH (145 aa). A Phosphoserine modification is found at S45. Position 60 is an N6-acetyllysine (K60). Position 64 (H64) interacts with heme b. Residue K83 is modified to N6-acetyllysine. H93 lines the heme b pocket. Residue C94 is modified to S-nitrosocysteine.

This sequence belongs to the globin family. In terms of assembly, heterotetramer of two alpha chains and two beta chains. As to expression, red blood cells.

Functionally, involved in oxygen transport from the lung to the various peripheral tissues. This chain is Hemoglobin subunit beta (HBB), found in Vicugna pacos (Alpaca).